A 321-amino-acid chain; its full sequence is Pectinesterase (321 aa).

An N-acetylthreonine modification is found at T1. The N-linked (GlcNAc...) (complex) asparagine glycan is linked to N75. T84 and Q114 together coordinate substrate. D137 functions as the Proton donor in the catalytic mechanism. An intrachain disulfide couples C151 to C171. The active-site Nucleophile is D158. Positions 226 and 228 each coordinate substrate. 3 N-linked (GlcNAc...) (complex) asparagine glycosylation sites follow: N275, N290, and N319.

This sequence belongs to the pectinesterase family. The N-glycans attached at Asn-75, Asn-275, Asn-290 and Asn-319 are complex oligosaccharides containing xylose, fucose, hexose and N-acetylglucosamine.

The enzyme catalyses [(1-&gt;4)-alpha-D-galacturonosyl methyl ester](n) + n H2O = [(1-&gt;4)-alpha-D-galacturonosyl](n) + n methanol + n H(+). It functions in the pathway glycan metabolism; pectin degradation; 2-dehydro-3-deoxy-D-gluconate from pectin: step 1/5. Inhibited by PMEI. In Actinidia deliciosa (Kiwi), this protein is Pectinesterase.